The sequence spans 355 residues: Phenylalanine--tRNA ligase alpha subunit (355 aa).

Glu-273 contributes to the Mg(2+) binding site.

This sequence belongs to the class-II aminoacyl-tRNA synthetase family. Phe-tRNA synthetase alpha subunit type 1 subfamily. In terms of assembly, tetramer of two alpha and two beta subunits. Mg(2+) serves as cofactor.

It localises to the cytoplasm. It carries out the reaction tRNA(Phe) + L-phenylalanine + ATP = L-phenylalanyl-tRNA(Phe) + AMP + diphosphate + H(+). The protein is Phenylalanine--tRNA ligase alpha subunit of Bifidobacterium longum (strain NCC 2705).